The sequence spans 269 residues: Tryptophan synthase alpha chain (269 aa).

Catalysis depends on proton acceptor residues E50 and D61.

It belongs to the TrpA family. Tetramer of two alpha and two beta chains.

The enzyme catalyses (1S,2R)-1-C-(indol-3-yl)glycerol 3-phosphate + L-serine = D-glyceraldehyde 3-phosphate + L-tryptophan + H2O. It functions in the pathway amino-acid biosynthesis; L-tryptophan biosynthesis; L-tryptophan from chorismate: step 5/5. In terms of biological role, the alpha subunit is responsible for the aldol cleavage of indoleglycerol phosphate to indole and glyceraldehyde 3-phosphate. In Buchnera aphidicola subsp. Baizongia pistaciae (strain Bp), this protein is Tryptophan synthase alpha chain.